The following is a 170-amino-acid chain: NADH-quinone oxidoreductase subunit B (170 aa).

4 residues coordinate [4Fe-4S] cluster: Cys-46, Cys-47, Cys-111, and Cys-141.

The protein belongs to the complex I 20 kDa subunit family. As to quaternary structure, NDH-1 is composed of 14 different subunits. Subunits NuoB, C, D, E, F, and G constitute the peripheral sector of the complex. The cofactor is [4Fe-4S] cluster.

Its subcellular location is the cell membrane. The catalysed reaction is a quinone + NADH + 5 H(+)(in) = a quinol + NAD(+) + 4 H(+)(out). In terms of biological role, NDH-1 shuttles electrons from NADH, via FMN and iron-sulfur (Fe-S) centers, to quinones in the respiratory chain. The immediate electron acceptor for the enzyme in this species is believed to be a menaquinone. Couples the redox reaction to proton translocation (for every two electrons transferred, four hydrogen ions are translocated across the cytoplasmic membrane), and thus conserves the redox energy in a proton gradient. The sequence is that of NADH-quinone oxidoreductase subunit B from Geobacillus sp. (strain WCH70).